We begin with the raw amino-acid sequence, 247 residues long: Uridylate kinase (247 aa).

16–19 (KLSG) is an ATP binding site. Residue G58 coordinates UMP. ATP contacts are provided by G59 and R63. Residues D78 and 139-146 (TGNPFFTT) each bind UMP. ATP is bound by residues T166, Y172, and D175.

This sequence belongs to the UMP kinase family. As to quaternary structure, homohexamer.

Its subcellular location is the cytoplasm. The enzyme catalyses UMP + ATP = UDP + ADP. The protein operates within pyrimidine metabolism; CTP biosynthesis via de novo pathway; UDP from UMP (UMPK route): step 1/1. Its activity is regulated as follows. Inhibited by UTP. In terms of biological role, catalyzes the reversible phosphorylation of UMP to UDP. This is Uridylate kinase from Xylella fastidiosa (strain 9a5c).